The chain runs to 385 residues: Tumor protein p53-inducible protein 13 (385 aa).

The N-terminal stretch at 1 to 27 (MVHPPPPPPRLLLVALVGLLSLREVVA) is a signal peptide. The Extracellular segment spans residues 28–301 (EPAEEAGTPC…ARGPTPRTEE (274 aa)). Positions 242–297 (APVSLTTGGPGGNGRSRTEAQMPSGQGNHGGCACPGQVSPAPRAAGPPRVARGPTP) are disordered. Over residues 281–297 (PAPRAAGPPRVARGPTP) the composition is skewed to low complexity. A helical transmembrane segment spans residues 302 to 322 (AAWAAMALTFLLVLLTLATLC). Residues 323-385 (TRLHRNFRRS…DSGPDSESSD (63 aa)) are Cytoplasmic-facing. Basic residues predominate over residues 359-369 (SRRIKRSRRRP). Residues 359 to 385 (SRRIKRSRRRPLLPPTPDSGPDSESSD) form a disordered region.

The protein localises to the cell membrane. It is found in the cytoplasm. May act as a tumor suppressor. Inhibits tumor cell growth, when overexpressed. The protein is Tumor protein p53-inducible protein 13 (Tp53i13) of Mus musculus (Mouse).